The sequence spans 135 residues: Mini-ribonuclease 3 (135 aa).

The active site involves Asp-17.

It belongs to the MrnC RNase family. As to quaternary structure, homodimer. Mg(2+) serves as cofactor.

It is found in the cytoplasm. Its function is as follows. Involved in correct processing of both the 5' and 3' ends of 23S rRNA precursor. Processes 30S rRNA precursor transcript even in absence of ribonuclease 3 (Rnc); Rnc processes 30S rRNA into smaller rRNA precursors. The chain is Mini-ribonuclease 3 from Bacillus cereus (strain ATCC 14579 / DSM 31 / CCUG 7414 / JCM 2152 / NBRC 15305 / NCIMB 9373 / NCTC 2599 / NRRL B-3711).